The primary structure comprises 79 residues: Cyclin-dependent kinases regulatory subunit 1 (79 aa).

Position 2 is an N-acetylserine (S2).

This sequence belongs to the CKS family. In terms of assembly, forms a homohexamer that can probably bind six kinase subunits.

Functionally, binds to the catalytic subunit of the cyclin dependent kinases and is essential for their biological function. The chain is Cyclin-dependent kinases regulatory subunit 1 (CKS1B) from Bos taurus (Bovine).